A 141-amino-acid chain; its full sequence is Nucleoside diphosphate kinase (141 aa).

ATP is bound by residues Lys11, Phe59, Arg87, Thr93, Arg104, and Asn114. His117 functions as the Pros-phosphohistidine intermediate in the catalytic mechanism.

This sequence belongs to the NDK family. As to quaternary structure, homotetramer. It depends on Mg(2+) as a cofactor.

The protein resides in the cytoplasm. It carries out the reaction a 2'-deoxyribonucleoside 5'-diphosphate + ATP = a 2'-deoxyribonucleoside 5'-triphosphate + ADP. It catalyses the reaction a ribonucleoside 5'-diphosphate + ATP = a ribonucleoside 5'-triphosphate + ADP. Its function is as follows. Major role in the synthesis of nucleoside triphosphates other than ATP. The ATP gamma phosphate is transferred to the NDP beta phosphate via a ping-pong mechanism, using a phosphorylated active-site intermediate. This is Nucleoside diphosphate kinase from Proteus mirabilis (strain HI4320).